The primary structure comprises 253 residues: Chloride intracellular channel protein 4 (253 aa).

A2 bears the N-acetylalanine mark. The segment at 2 to 101 is required for insertion into the membrane; the sequence is ALSMPLNGLK…EEFLEEVLCP (100 aa). A Phosphoserine modification is found at S4. The residue at position 24 (K24) is an N6-acetyllysine. The G-site motif lies at 35-38; the sequence is CPFS. A helical transmembrane segment spans residues 37 to 57; the sequence is FSQRLFMILWLKGVVFSVTTV. Positions 81 to 244 constitute a GST C-terminal domain; it reads NSEVKTDVNK…PSDKEVEIAY (164 aa). An N6-acetyllysine modification is found at K130. Phosphoserine is present on residues S132, S167, and S236. Y244 is subject to Phosphotyrosine.

The protein belongs to the chloride channel CLIC family. Component of a multimeric complex consisting of several cytoskeletal proteins, including actin, ezrin, alpha-actinin, gelsolin, IQGAP1 and CLIC5A. Binds directly to brain dynamin I in a complex containing actin, tubulin and 14-3-3 isoforms. Monomer. Interacts with HRH3. Interacts with AKAP9. Detected in epithelial cells from colon, esophagus and kidney (at protein level). Expression is prominent in heart, kidney, placenta and skeletal muscle.

The protein resides in the cytoplasm. It localises to the cytoskeleton. Its subcellular location is the microtubule organizing center. The protein localises to the centrosome. It is found in the cytoplasmic vesicle membrane. The protein resides in the nucleus. It localises to the cell membrane. Its subcellular location is the mitochondrion. The protein localises to the cell junction. It is found in the endoplasmic reticulum membrane. The enzyme catalyses chloride(in) = chloride(out). It catalyses the reaction thiocyanate(in) = thiocyanate(out). The catalysed reaction is nitrate(in) = nitrate(out). It carries out the reaction iodide(out) = iodide(in). The enzyme catalyses bromide(in) = bromide(out). It catalyses the reaction fluoride(in) = fluoride(out). The catalysed reaction is choline(out) = choline(in). With respect to regulation, inhibited by rapamycin, amphotericin B and IAA-94. In terms of biological role, in the soluble state, catalyzes glutaredoxin-like thiol disulfide exchange reactions with reduced glutathione as electron donor. Can insert into membranes and form voltage-dependent multi-ion conductive channels. Membrane insertion seems to be redox-regulated and may occur only under oxidizing conditions. Has alternate cellular functions like a potential role in angiogenesis or in maintaining apical-basolateral membrane polarity during mitosis and cytokinesis. Could also promote endothelial cell proliferation and regulate endothelial morphogenesis (tubulogenesis). Promotes cell-surface expression of HRH3. This Homo sapiens (Human) protein is Chloride intracellular channel protein 4.